Consider the following 222-residue polypeptide: Deoxyribose-phosphate aldolase (222 aa).

Residue Asp-93 is the Proton donor/acceptor of the active site. The active-site Schiff-base intermediate with acetaldehyde is the Lys-156. The Proton donor/acceptor role is filled by Lys-186.

This sequence belongs to the DeoC/FbaB aldolase family. DeoC type 1 subfamily.

Its subcellular location is the cytoplasm. It catalyses the reaction 2-deoxy-D-ribose 5-phosphate = D-glyceraldehyde 3-phosphate + acetaldehyde. Its pathway is carbohydrate degradation; 2-deoxy-D-ribose 1-phosphate degradation; D-glyceraldehyde 3-phosphate and acetaldehyde from 2-deoxy-alpha-D-ribose 1-phosphate: step 2/2. Catalyzes a reversible aldol reaction between acetaldehyde and D-glyceraldehyde 3-phosphate to generate 2-deoxy-D-ribose 5-phosphate. The protein is Deoxyribose-phosphate aldolase of Corynebacterium glutamicum (strain ATCC 13032 / DSM 20300 / JCM 1318 / BCRC 11384 / CCUG 27702 / LMG 3730 / NBRC 12168 / NCIMB 10025 / NRRL B-2784 / 534).